Reading from the N-terminus, the 561-residue chain is DNA ligase (561 aa).

Glu249 contacts ATP. The active-site N6-AMP-lysine intermediate is the Lys251. Residues Arg256, Arg271, Glu301, Phe340, Arg417, and Lys423 each coordinate ATP.

It belongs to the ATP-dependent DNA ligase family. Requires Mg(2+) as cofactor.

The catalysed reaction is ATP + (deoxyribonucleotide)n-3'-hydroxyl + 5'-phospho-(deoxyribonucleotide)m = (deoxyribonucleotide)n+m + AMP + diphosphate.. In terms of biological role, DNA ligase that seals nicks in double-stranded DNA during DNA replication, DNA recombination and DNA repair. The sequence is that of DNA ligase from Methanothermobacter thermautotrophicus (strain ATCC 29096 / DSM 1053 / JCM 10044 / NBRC 100330 / Delta H) (Methanobacterium thermoautotrophicum).